The chain runs to 692 residues: DNA ligase (692 aa).

Residues 35–39 (DLVYD), 88–89 (SL), and Glu117 contribute to the NAD(+) site. The N6-AMP-lysine intermediate role is filled by Lys119. NAD(+) contacts are provided by Arg140, Glu176, Lys301, and Lys325. Cys416, Cys419, Cys434, and Cys439 together coordinate Zn(2+). Residues 611–692 (LTNQSNSWAS…FDLIKNSKKT (82 aa)) enclose the BRCT domain.

The protein belongs to the NAD-dependent DNA ligase family. LigA subfamily. Mg(2+) is required as a cofactor. Mn(2+) serves as cofactor.

The catalysed reaction is NAD(+) + (deoxyribonucleotide)n-3'-hydroxyl + 5'-phospho-(deoxyribonucleotide)m = (deoxyribonucleotide)n+m + AMP + beta-nicotinamide D-nucleotide.. Functionally, DNA ligase that catalyzes the formation of phosphodiester linkages between 5'-phosphoryl and 3'-hydroxyl groups in double-stranded DNA using NAD as a coenzyme and as the energy source for the reaction. It is essential for DNA replication and repair of damaged DNA. The polypeptide is DNA ligase (Mesomycoplasma hyopneumoniae (strain 7448) (Mycoplasma hyopneumoniae)).